Here is a 437-residue protein sequence, read N- to C-terminus: Ribosomal protein uS12 methylthiotransferase RimO (437 aa).

The 111-residue stretch at 4-114 folds into the MTTase N-terminal domain; it reads PRVSFVSLGC…VMAAVHEAAP (111 aa). 6 residues coordinate [4Fe-4S] cluster: C13, C49, C78, C145, C149, and C152. Residues 131-369 enclose the Radical SAM core domain; that stretch reads LTPRHYAYLK…MQRQQKISAT (239 aa). Positions 372-437 constitute a TRAM domain; it reads AKKVGKRLPV…DAYDLYGSAV (66 aa).

It belongs to the methylthiotransferase family. RimO subfamily. [4Fe-4S] cluster serves as cofactor.

It is found in the cytoplasm. It catalyses the reaction L-aspartate(89)-[ribosomal protein uS12]-hydrogen + (sulfur carrier)-SH + AH2 + 2 S-adenosyl-L-methionine = 3-methylsulfanyl-L-aspartate(89)-[ribosomal protein uS12]-hydrogen + (sulfur carrier)-H + 5'-deoxyadenosine + L-methionine + A + S-adenosyl-L-homocysteine + 2 H(+). Its function is as follows. Catalyzes the methylthiolation of an aspartic acid residue of ribosomal protein uS12. This Mesorhizobium japonicum (strain LMG 29417 / CECT 9101 / MAFF 303099) (Mesorhizobium loti (strain MAFF 303099)) protein is Ribosomal protein uS12 methylthiotransferase RimO.